The sequence spans 142 residues: Maximins y/H11 (142 aa).

The first 18 residues, 1-18 (MNFKYIVAVSFLITSGYA), serve as a signal peptide directing secretion. A propeptide spanning residues 19-43 (ESVKNDEQSLSQRDVLEEESLREIR) is cleaved from the precursor. At phenylalanine 68 the chain carries Phenylalanine amide. A propeptide spanning residues 72-121 (SAEDHEVMKRLEAVIRDLDSLDHPEEASERETRGFNQEEIANLFTKKEKR) is cleaved from the precursor. Residue isoleucine 141 is modified to Isoleucine amide.

This sequence belongs to the bombinin family. In terms of tissue distribution, expressed by the skin glands.

The protein resides in the secreted. Its function is as follows. Maximin-y shows antimicrobial activity against bacteria and against the fungus C.albicans. It has little hemolytic activity. Maximin-H11 shows antimicrobial activity against bacteria and against the fungus C.albicans. Shows strong hemolytic activity. This is Maximins y/H11 from Bombina maxima (Giant fire-bellied toad).